Here is a 344-residue protein sequence, read N- to C-terminus: Meiotic recombination protein DMC1 homolog (344 aa).

Positions 1–22 (MMASLKAEETSQMQLVEREEND) are disordered. 133–140 (GEFRSGKT) provides a ligand contact to ATP. R235 lines the dsDNA pocket. SsDNA is bound by residues R235, F238, R241, R247, and R315. Residues R241 and R247 each contribute to the dsDNA site.

This sequence belongs to the RecA family. DMC1 subfamily. As to quaternary structure, double stacked ring-shaped homooctamer. Interacts with BRCA2A and BRCA2B. As to expression, expressed in mitotic and/or meiotic tissues. Expressed in roots, leaves and anthers and carpels of young fower buds.

It is found in the nucleus. Functionally, may participate in meiotic recombination, specifically in homologous strand assimilation, which is required for the resolution of meiotic double-strand breaks. Mediates interhomolog recombination during meiosis. The polypeptide is Meiotic recombination protein DMC1 homolog (Arabidopsis thaliana (Mouse-ear cress)).